The following is a 283-amino-acid chain: Phytanoyl-CoA dioxygenase (283 aa).

2-oxoglutarate-binding positions include lysine 99, methionine 138, 153–155 (HQD), and tryptophan 170. Histidine 153 and aspartate 155 together coordinate Fe cation. Histidine 238 serves as a coordination point for Fe cation. 2-oxoglutarate is bound by residues serine 240 and arginine 249.

The protein belongs to the PhyH family. Fe cation serves as cofactor. It depends on L-ascorbate as a cofactor.

The catalysed reaction is phytanoyl-CoA + 2-oxoglutarate + O2 = 2-hydroxyphytanoyl-CoA + succinate + CO2. The protein operates within lipid metabolism; fatty acid metabolism. Functionally, converts phytanoyl-CoA to 2-hydroxyphytanoyl-CoA. In Arabidopsis thaliana (Mouse-ear cress), this protein is Phytanoyl-CoA dioxygenase.